We begin with the raw amino-acid sequence, 91 residues long: Putative 26S proteasome complex subunit sem-1 (91 aa).

The interval 1 to 73 is disordered; it reads MASTQPKNDA…SWDDDDTSDD (73 aa). Residues 8 to 28 show a composition bias toward basic and acidic residues; that stretch reads NDAKSTEPKPEQPVTEKKTAV. Acidic residues-rich tracts occupy residues 29-48 and 63-72; these read LEEDDEFEDFPVDDWEAEDT and ESWDDDDTSD.

This sequence belongs to the DSS1/SEM1 family. As to quaternary structure, part of the 26S proteasome.

Subunit of the 26S proteasome which plays a role in ubiquitin-dependent proteolysis. The protein is Putative 26S proteasome complex subunit sem-1 (sem-1) of Neurospora crassa (strain ATCC 24698 / 74-OR23-1A / CBS 708.71 / DSM 1257 / FGSC 987).